The following is an 89-amino-acid chain: Dynein light chain 1, cytoplasmic (89 aa).

The protein belongs to the dynein light chain family. Interacts with spn-F. Forms ternary complexes with spn-F and IKKepsilon. In terms of tissue distribution, ubiquitous.

It localises to the cytoplasm. The protein localises to the cytoskeleton. In terms of biological role, acts as a non-catalytic accessory component of a dynein complex. The polypeptide is Dynein light chain 1, cytoplasmic (ctp) (Drosophila melanogaster (Fruit fly)).